Here is a 142-residue protein sequence, read N- to C-terminus: MTLTDSDKAAIVALWGKIAPQASAIGAEALERLFLSYPQTKTYFSHFDVSHGSADLSNHGGKVVNALGEAAKHIDDLDSALSTLSDLHAYNLRIDPGNFKLLSHTIQVTLAIHFHKEFDAATQAAWDKFLAEVATVLTSKYR.

A Globin domain is found at 2–142; the sequence is TLTDSDKAAI…VATVLTSKYR (141 aa). Residue H59 participates in O2 binding. A heme b-binding site is contributed by H88.

It belongs to the globin family. In terms of assembly, heterotetramer of two alpha chains and two beta chains. As to expression, red blood cells.

In terms of biological role, this is a larval (tadpole) alpha-globin. This chain is Hemoglobin subunit alpha-4 (hba4), found in Xenopus laevis (African clawed frog).